The sequence spans 355 residues: Myricetin 7/4'-O-methyltransferase 2 (355 aa).

D221 contributes to the S-adenosyl-L-methionine binding site. H259 (proton acceptor) is an active-site residue.

It belongs to the class I-like SAM-binding methyltransferase superfamily. Cation-independent O-methyltransferase family. Homodimer. Mainly expressed in leaves secreting glandular trichomes types 1 and 4 and, to a lesser extent, in storage trichomes type 6.

The catalysed reaction is quercetin + S-adenosyl-L-methionine = rhamnetin + S-adenosyl-L-homocysteine + H(+). It catalyses the reaction kaempferol + S-adenosyl-L-methionine = kaempferide + S-adenosyl-L-homocysteine + H(+). It carries out the reaction myricetin + S-adenosyl-L-methionine = 7-O-methylmyricetin + S-adenosyl-L-homocysteine + H(+). The enzyme catalyses kaempferide + S-adenosyl-L-methionine = 7,4'-O-dimethylkaempferol + S-adenosyl-L-homocysteine + H(+). The catalysed reaction is isorhamnetin + S-adenosyl-L-methionine = 3',4'-O-dimethylquercetin + S-adenosyl-L-homocysteine + 2 H(+). It catalyses the reaction 3',4',5,7-tetrahydroxy-3-methoxyflavone + S-adenosyl-L-methionine = 3',4',5-trihydroxy-3,7-dimethoxyflavone + S-adenosyl-L-homocysteine + H(+). It carries out the reaction rhamnetin + S-adenosyl-L-methionine = 7,4'-O-dimethylquercetin + S-adenosyl-L-homocysteine + H(+). The enzyme catalyses syringetin + S-adenosyl-L-methionine = 7,3',5'-O-trimethylmyricetin + S-adenosyl-L-homocysteine + H(+). The catalysed reaction is 3',4',5'-O-trimethylmyricetin + S-adenosyl-L-methionine = 7,3',4',5'-O-tetramethylmyricetin + S-adenosyl-L-homocysteine. It participates in flavonoid metabolism. In terms of biological role, flavonoid 7/4'-O-methyltransferase involved in the biosynthesis of polymethoxylated flavonoids natural products such as myricetin derivatives, aroma compounds possessing antioxidant properties and exhibiting pharmacological activities such as anti-carcinogen, anti-viral, anti-thrombotic, anti-diabetic, anti-atherosclerotic, and anti-inflammatory effects. Catalyzes S-adenosylmethionine-dependent regioselective 7/4'-O-methylation of flavonoids; active on various hydroxylated flavonoid substrates, including myricetin, quercetin and kaempferol. Mediates the formation of 4'-methyl derivatives from kaempferol, 3'-methyl quercetin (isorhamnetin), 7-methyl quercetin (rhamnetin) and 3'-methyl myricetin, producing 4'-methyl kaempferol (kaempferide), 3',4'-dimethyl quercetin (4'-O-methyl isorhamnetin), 7,4'-dimethyl quercetin (4'-O-methyl rhamnetin, rhamnacene) and 3',4'-dimethyl myricetin, respectively. Triggers the 7-O-methylation of quercetin, myricetin, 4'-methyl kaempferol (kaempferide), 3-methyl quercetin, 3',5'-dimethyl myricetin (syringetin) and 3',4',5'-trimethyl myricetin, thus leading to production of 7-methyl quercetin (rhamnetin), 7-methyl myricetin, 7,4'-dimethyl kaempferol (7-O-methyl kaempferide), 3,7-dimethyl quercetin, 7,3',5'-trimethyl myricetin (7-O-methyl syringetin) and 7,3',4',5'-tetramethyl myricetin, respectively. This chain is Myricetin 7/4'-O-methyltransferase 2, found in Solanum habrochaites (Wild tomato).